The sequence spans 689 residues: Choline transporter-like 1 (689 aa).

The chain crosses the membrane as a helical span at residues 23 to 43 (IFWLVVYILFWIALLVIAVFS). Residue asparagine 134 is glycosylated (N-linked (GlcNAc...) asparagine). Transmembrane regions (helical) follow at residues 199–219 (FSDI…SLIF) and 233–255 (IISW…VLWW). The N-linked (GlcNAc...) asparagine glycan is linked to asparagine 279. 2 consecutive transmembrane segments (helical) span residues 283–303 (IYVL…VIYY) and 333–353 (VLAF…IVCL). Residues asparagine 375 and asparagine 389 are each glycosylated (N-linked (GlcNAc...) asparagine). A run of 4 helical transmembrane segments spans residues 412 to 432 (IYII…QLVI), 461 to 481 (LGSV…RLIL), 562 to 582 (LVLF…SILM), and 591 to 611 (FYMA…HIVL).

It belongs to the CTL (choline transporter-like) family.

It is found in the membrane. The polypeptide is Choline transporter-like 1 (Aedes aegypti (Yellowfever mosquito)).